Reading from the N-terminus, the 322-residue chain is Follistatin-A (322 aa).

Residues 1–32 (MLRMLKRQQLHPGMILLLFWLCYLIEDQKVQA) form the signal peptide. The 74-residue stretch at 33–106 (GNCWLQQGKN…TCDNVDCGPG (74 aa)) folds into the TB domain. 8 disulfides stabilise this stretch: cysteine 35–cysteine 58, cysteine 45–cysteine 91, cysteine 59–cysteine 94, cysteine 98–cysteine 109, cysteine 103–cysteine 119, cysteine 121–cysteine 153, cysteine 125–cysteine 146, and cysteine 135–cysteine 167. A glycan (N-linked (GlcNAc...) asparagine) is linked at asparagine 75. Positions 97–120 (TCDNVDCGPGKRCKMNRRSKPRCV) constitute a Follistatin-like 1 domain. Kazal-like domains follow at residues 103 to 169 (CGPG…KCKK), 189 to 244 (NAYC…KCIK), and 267 to 321 (RGRC…SCNC). Residue asparagine 127 is glycosylated (N-linked (GlcNAc...) asparagine). Residues 170–193 (TCRDVLCPGSSTCVVDQTNNAYCV) form the Follistatin-like 2 domain. Intrachain disulfides connect cysteine 195/cysteine 228, cysteine 199/cysteine 221, and cysteine 210/cysteine 242. Residues 247–271 (SCDDIHCSAGKKCLWDAKMSRGRCA) enclose the Follistatin-like 3 domain. 3 disulfide bridges follow: cysteine 273/cysteine 305, cysteine 277/cysteine 298, and cysteine 287/cysteine 319. The N-linked (GlcNAc...) asparagine glycan is linked to asparagine 291.

As to quaternary structure, monomer. In terms of tissue distribution, not expressed in the organizer region. Expression in gastrulating embryos is confined to anterior and paraxial regions, which give rise to head mesoderm and the first five somites. In addition, expressed transiently in a subset of cells in the posterior notochord anlage. Later, expression is seen in brain, eyes and somites.

Binds directly to activin and functions as an activin antagonist. Specific inhibitor of the biosynthesis and secretion of pituitary follicle stimulating hormone (fsh). Inhibits bmp-signaling during later stages of development including late phases of dorsoventral patterning, to refine the early pattern set up by the interaction of chordino and bmp2/4. Not involved in organizer function or early phases of dorsoventral pattern formation. The chain is Follistatin-A (fsta) from Danio rerio (Zebrafish).